Here is a 226-residue protein sequence, read N- to C-terminus: Putative 5'-nucleotidase alr3139 (226 aa).

The a divalent metal cation site is built by aspartate 8, aspartate 9, serine 38, and asparagine 89.

This sequence belongs to the SurE nucleotidase family. A divalent metal cation serves as cofactor.

The protein localises to the cytoplasm. It carries out the reaction a ribonucleoside 5'-phosphate + H2O = a ribonucleoside + phosphate. In terms of biological role, nucleotidase that shows phosphatase activity on nucleoside 5'-monophosphates. The sequence is that of Putative 5'-nucleotidase alr3139 from Nostoc sp. (strain PCC 7120 / SAG 25.82 / UTEX 2576).